The sequence spans 142 residues: Ribosome maturation factor RimP (142 aa).

This sequence belongs to the RimP family.

It is found in the cytoplasm. In terms of biological role, required for maturation of 30S ribosomal subunits. The chain is Ribosome maturation factor RimP from Wolinella succinogenes (strain ATCC 29543 / DSM 1740 / CCUG 13145 / JCM 31913 / LMG 7466 / NCTC 11488 / FDC 602W) (Vibrio succinogenes).